We begin with the raw amino-acid sequence, 417 residues long: Glucose-1-phosphatase (417 aa).

Residues 1-23 (MKYKVLTLCLSAALFAPIAPTMA) form the signal peptide. Position 41 (R41) interacts with substrate. The active-site Nucleophile is H42. Residues R45, R118, and E220 each contribute to the substrate site. The active-site Proton donor is the D315.

This sequence belongs to the histidine acid phosphatase family. Homodimer.

It is found in the periplasm. The enzyme catalyses alpha-D-glucose 1-phosphate + H2O = D-glucose + phosphate. The chain is Glucose-1-phosphatase (agp) from Providencia rettgeri.